A 371-amino-acid chain; its full sequence is Ribosomal RNA small subunit methyltransferase H (371 aa).

Residues 43–45, Asp-62, Leu-96, Asp-110, and Gln-117 contribute to the S-adenosyl-L-methionine site; that span reads GGH. The tract at residues 315 to 371 is disordered; it reads AAERLDPTQQQRQRTDRERYRRQVRAMHQPGTGSAVRRPVSGDDGTGTDEEGEGHDD. Over residues 360–371 the composition is skewed to acidic residues; it reads TGTDEEGEGHDD.

The protein belongs to the methyltransferase superfamily. RsmH family.

It localises to the cytoplasm. The catalysed reaction is cytidine(1402) in 16S rRNA + S-adenosyl-L-methionine = N(4)-methylcytidine(1402) in 16S rRNA + S-adenosyl-L-homocysteine + H(+). Its function is as follows. Specifically methylates the N4 position of cytidine in position 1402 (C1402) of 16S rRNA. This Salinispora tropica (strain ATCC BAA-916 / DSM 44818 / JCM 13857 / NBRC 105044 / CNB-440) protein is Ribosomal RNA small subunit methyltransferase H.